Reading from the N-terminus, the 159-residue chain is MADPALFEFLHTEMVAELWAQDPDPGPGGQKTSLLVLEGMGFRVGQALGERLPRETLTFREELDILKFLCKDLWVAVFHKQMDSLRTNHQGTYVLQDNSFPLLVRMASGLQYLEEAPKFLAFTCGLLRGTLSTLGVKSLVTASVAALPACKFQVVIQKL.

Residue serine 33 is modified to Phosphoserine.

Belongs to the TRAPP small subunits family. BET3 subfamily. Part of the multisubunit transport protein particle (TRAPP) complex. Heterodimer with TRAPPC3. The heterodimer TRAPPC3-TRAPPC6A interacts with TRAPPC2L. Interacts with TRAPPC2L.

The protein resides in the golgi apparatus. It is found in the cis-Golgi network. It localises to the endoplasmic reticulum. Functionally, may play a role in vesicular transport during the biogenesis of melanosomes. The protein is Trafficking protein particle complex subunit 6A of Bos taurus (Bovine).